Consider the following 727-residue polypeptide: Testis anion transporter 1 (727 aa).

Residues 1–23 (MLTIFPFLEWMCMYRLKDWLLGD) lie on the Cytoplasmic side of the membrane. The helical transmembrane segment at 24–44 (LLAGISVGLVQVPQGLTLSLL) threads the bilayer. At 45–47 (ARQ) the chain is on the extracellular side. A helical membrane pass occupies residues 48 to 68 (LIPPLNIAYAAFCSSVIYVIF). Over 69–74 (GSCHQM) the chain is Cytoplasmic. A helical membrane pass occupies residues 75-95 (SIGSFFLVSALLINVLKISPL). At 96–130 (NNGHLVMGSFLKDEFSAPSYLMGYNKSLSVVATTT) the chain is on the extracellular side. A glycan (N-linked (GlcNAc...) asparagine) is linked at Asn120. A helical transmembrane segment spans residues 131–151 (FLTGIIQLIMGVLGLGFIATY). Residues 152–160 (LPESAMSAY) lie on the Cytoplasmic side of the membrane. A helical transmembrane segment spans residues 161-181 (LAAVALHIMLSQLTCIFGIMI). Topologically, residues 182–198 (SFHAGPISFFYDIINYC) are extracellular. Residues 199–219 (VALPKANSTSILLFLTVVVAL) traverse the membrane as a helical segment. Residues 220–235 (RINKCIRISFNQYPIE) lie on the Cytoplasmic side of the membrane. A helical transmembrane segment spans residues 236-256 (FPMELFLIIGFTVIGNKITMA). Topologically, residues 257 to 283 (TETSQTLIDMIPYSFLFPVTPDFSVLP) are extracellular. Residues 284–304 (KIILQAISLSLVSSFLLVFLG) traverse the membrane as a helical segment. At 305-360 (KKIASLHNYSVNSNQDLIAIGLCNVVSSFFRSCVFTGAVARTIIQDKSGGRQQFAS) the chain is on the cytoplasmic side. Residues 361–381 (LVGAGVMLLLMVKMGHFFYAL) traverse the membrane as a helical segment. Over 382–383 (PN) the chain is Extracellular. The chain crosses the membrane as a helical span at residues 384 to 404 (AVLAGIILSNVVPYLETISNL). The Cytoplasmic segment spans residues 405 to 424 (PSLWRQDQYDCALWMMTFSS). The helical transmembrane segment at 425–445 (SIFLGLDIGLIISVVSAFFIT) threads the bilayer. At 446–727 (SVRSHRAKIL…LPSFHLQHIF (282 aa)) the chain is on the extracellular side. The STAS domain occupies 471–722 (DYREIITIPG…NSLSRLPSFH (252 aa)). Residues 592 to 727 (TVSSMSQKNQ…LPSFHLQHIF (136 aa)) are interaction with RACGAP1.

It belongs to the SLC26A/SulP transporter (TC 2.A.53) family. In terms of assembly, interacts with RACGAP1. Interacts with CFTR; stimulates anion transport activity of CFTR. In terms of processing, N-glycosylated.

The protein resides in the membrane. The enzyme catalyses sulfate(out) + chloride(in) = sulfate(in) + chloride(out). It catalyses the reaction oxalate(in) + chloride(out) = oxalate(out) + chloride(in). Functionally, antiporter that mediates the exchange of sulfate and oxalate against chloride ions across a membrane. Stimulates anion transport activity of CFTR. May cooperate with CFTR in the regulation of chloride and bicarbonate ions fluxes required for activation of the ADCY10/PKA pathway during sperm motility and sperm capacitation. May play a role in sperm tail differentiation and motility and hence male fertility. This chain is Testis anion transporter 1, found in Macaca fascicularis (Crab-eating macaque).